Consider the following 419-residue polypeptide: Transcription termination factor Rho (419 aa).

The region spanning 48–123 (DIFGDGVLEI…LKVNAVNYDK (76 aa)) is the Rho RNA-BD domain. RNA-binding regions lie at residues 61 to 66 (GFGFLR), 78 to 80 (DIY), and 108 to 110 (ERY). Residues 169–174 (GRGQRG), 181–186 (KAGKTI), and Arg-212 contribute to the ATP site. Residues 284–288 (VLTGG) are RNA-binding 2.

Belongs to the Rho family. In terms of assembly, homohexamer. The homohexamer assembles into an open ring structure.

Facilitates transcription termination by a mechanism that involves Rho binding to the nascent RNA, activation of Rho's RNA-dependent ATPase activity, and release of the mRNA from the DNA template. The protein is Transcription termination factor Rho of Buchnera aphidicola subsp. Schizaphis graminum (strain Sg).